Consider the following 571-residue polypeptide: Proline--tRNA ligase (571 aa).

It belongs to the class-II aminoacyl-tRNA synthetase family. ProS type 1 subfamily. Homodimer.

Its subcellular location is the cytoplasm. The catalysed reaction is tRNA(Pro) + L-proline + ATP = L-prolyl-tRNA(Pro) + AMP + diphosphate. Catalyzes the attachment of proline to tRNA(Pro) in a two-step reaction: proline is first activated by ATP to form Pro-AMP and then transferred to the acceptor end of tRNA(Pro). As ProRS can inadvertently accommodate and process non-cognate amino acids such as alanine and cysteine, to avoid such errors it has two additional distinct editing activities against alanine. One activity is designated as 'pretransfer' editing and involves the tRNA(Pro)-independent hydrolysis of activated Ala-AMP. The other activity is designated 'posttransfer' editing and involves deacylation of mischarged Ala-tRNA(Pro). The misacylated Cys-tRNA(Pro) is not edited by ProRS. This Shewanella baltica (strain OS185) protein is Proline--tRNA ligase.